Reading from the N-terminus, the 141-residue chain is Large ribosomal subunit protein uL11c (141 aa).

This sequence belongs to the universal ribosomal protein uL11 family. As to quaternary structure, part of the ribosomal stalk of the 50S ribosomal subunit. Interacts with L10 and the large rRNA to form the base of the stalk. L10 forms an elongated spine to which L12 dimers bind in a sequential fashion forming a multimeric L10(L12)X complex.

Its subcellular location is the plastid. It localises to the chloroplast. Forms part of the ribosomal stalk which helps the ribosome interact with GTP-bound translation factors. This chain is Large ribosomal subunit protein uL11c, found in Guillardia theta (Cryptophyte).